Here is an 877-residue protein sequence, read N- to C-terminus: GPI ethanolamine phosphate transferase 2 (877 aa).

Residues N190 and N368 are each glycosylated (N-linked (GlcNAc...) asparagine). Transmembrane regions (helical) follow at residues 409–429 (VDIYIGLSILVAMAIVAFGLF), 443–463 (YNWYFIGISIVYSIHFHASSL), 464–484 (IEEEYQIWWFFSIICLFALYF), 528–548 (VDLLWVLNIATYFLTAILIYS), and 570–590 (DFGSLVTFIVTFVTCSISFSF). N611 carries an N-linked (GlcNAc...) asparagine glycan. Helical transmembrane passes span 634 to 654 (IHLSKILFYCIGVLIIVRIVL), 683 to 703 (EIVPIFLIFSLVKFSAAKLLA), 716 to 736 (LMIIITLFSLCMQNLSFFSMG), 758 to 778 (VFLVGVLTYCSNFAGPIFWSL), 817 to 837 (LAGFLFYSMAGLSLVASCFNL), and 854 to 876 (FASWTLLTNILIDTISSLSILAL).

It belongs to the PIGG/PIGN/PIGO family. PIGG subfamily.

It localises to the endoplasmic reticulum membrane. It participates in glycolipid biosynthesis; glycosylphosphatidylinositol-anchor biosynthesis. Functionally, ethanolamine phosphate transferase involved in glycosylphosphatidylinositol-anchor biosynthesis. Transfers ethanolamine phosphate to the GPI second mannose. The sequence is that of GPI ethanolamine phosphate transferase 2 (LAS21) from Debaryomyces hansenii (strain ATCC 36239 / CBS 767 / BCRC 21394 / JCM 1990 / NBRC 0083 / IGC 2968) (Yeast).